Here is a 381-residue protein sequence, read N- to C-terminus: Probable tRNA sulfurtransferase (381 aa).

Positions 60–168 (REATEVLTRV…EGKAYIFVDK (109 aa)) constitute a THUMP domain. ATP contacts are provided by residues 186-187 (LL), K269, G291, and Q300.

Belongs to the ThiI family.

It localises to the cytoplasm. It carries out the reaction [ThiI sulfur-carrier protein]-S-sulfanyl-L-cysteine + a uridine in tRNA + 2 reduced [2Fe-2S]-[ferredoxin] + ATP + H(+) = [ThiI sulfur-carrier protein]-L-cysteine + a 4-thiouridine in tRNA + 2 oxidized [2Fe-2S]-[ferredoxin] + AMP + diphosphate. The catalysed reaction is [ThiS sulfur-carrier protein]-C-terminal Gly-Gly-AMP + S-sulfanyl-L-cysteinyl-[cysteine desulfurase] + AH2 = [ThiS sulfur-carrier protein]-C-terminal-Gly-aminoethanethioate + L-cysteinyl-[cysteine desulfurase] + A + AMP + 2 H(+). The protein operates within cofactor biosynthesis; thiamine diphosphate biosynthesis. Its function is as follows. Catalyzes the ATP-dependent transfer of a sulfur to tRNA to produce 4-thiouridine in position 8 of tRNAs, which functions as a near-UV photosensor. Also catalyzes the transfer of sulfur to the sulfur carrier protein ThiS, forming ThiS-thiocarboxylate. This is a step in the synthesis of thiazole, in the thiamine biosynthesis pathway. The sulfur is donated as persulfide by IscS. In Thermococcus kodakarensis (strain ATCC BAA-918 / JCM 12380 / KOD1) (Pyrococcus kodakaraensis (strain KOD1)), this protein is Probable tRNA sulfurtransferase.